A 582-amino-acid polypeptide reads, in one-letter code: Formate--tetrahydrofolate ligase (582 aa).

Residue 65-72 (TPLGEGKT) participates in ATP binding.

It belongs to the formate--tetrahydrofolate ligase family.

The enzyme catalyses (6S)-5,6,7,8-tetrahydrofolate + formate + ATP = (6R)-10-formyltetrahydrofolate + ADP + phosphate. It functions in the pathway one-carbon metabolism; tetrahydrofolate interconversion. The sequence is that of Formate--tetrahydrofolate ligase from Vibrio atlanticus (strain LGP32) (Vibrio splendidus (strain Mel32)).